The following is a 213-amino-acid chain: MHKDGVLIKGNREGINATIDMEKFASFEDMLNMLIKKLSKGKHFYKGTTLILNVNLSLIKKNDIKKLKESLLNEIELNEIIFEQLEQESNIQTKIFNGVYEGKTKFIRRTVRSGQCLNYPGNIVIIGDVNSGAEVHAAGNIIVLGSLKGSVNAGNTGNKKSIIAAFLLEPEILKIADVITISPDGLDKPRYPEIAKVKDGTIIVEPYLANKYI.

This sequence belongs to the MinC family. As to quaternary structure, interacts with MinD and FtsZ.

Its function is as follows. Cell division inhibitor that blocks the formation of polar Z ring septums. Rapidly oscillates between the poles of the cell to destabilize FtsZ filaments that have formed before they mature into polar Z rings. Prevents FtsZ polymerization. In Clostridium botulinum (strain Eklund 17B / Type B), this protein is Probable septum site-determining protein MinC.